A 398-amino-acid chain; its full sequence is Alpha-(1,3)-fucosyltransferase 4 (398 aa).

Over 1–15 (MRARWGRRGARRGGP) the chain is Cytoplasmic. The helical; Signal-anchor for type II membrane protein transmembrane segment at 16–40 (GLPGTHLALLAASLLSSSVAIYVCW) threads the bilayer. Residues 41–398 (KQLPPLPWAS…VPNLAGWFQQ (358 aa)) are Lumenal-facing. Asparagine 84, asparagine 183, and asparagine 311 each carry an N-linked (GlcNAc...) asparagine glycan.

This sequence belongs to the glycosyltransferase 10 family.

It localises to the golgi apparatus. The protein localises to the golgi stack membrane. The enzyme catalyses a beta-D-galactosyl-(1-&gt;4)-N-acetyl-beta-D-glucosaminyl derivative + GDP-beta-L-fucose = a beta-D-galactosyl-(1-&gt;4)-[alpha-L-fucosyl-(1-&gt;3)]-N-acetyl-beta-D-glucosaminyl derivative + GDP + H(+). It catalyses the reaction an N-acetyl-alpha-neuraminyl-(2-&gt;3)-beta-D-galactosyl-(1-&gt;4)-N-acetyl-beta-D-glucosaminyl derivative + GDP-beta-L-fucose = an alpha-Neu5Ac-(2-&gt;3)-beta-D-Gal-(1-&gt;4)-[alpha-L-Fuc-(1-&gt;3)]-beta-D-GlcNAc derivative + GDP + H(+). The catalysed reaction is an alpha-Neu5Ac-(2-&gt;3)-beta-D-Gal-(1-&gt;4)-beta-D-GlcNAc-(1-&gt;3)-beta-D-Gal-(1-&gt;4)-beta-D-GlcNAc derivative + GDP-beta-L-fucose = an alpha-Neu5Ac-(2-&gt;3)-beta-D-Gal-(1-&gt;4)-beta-D-GlcNAc-(1-&gt;3)-beta-D-Gal-(1-&gt;4)-[alpha-L-Fuc-(1-&gt;3)]-beta-D-GlcNAc derivative + GDP + H(+). It carries out the reaction an alpha-Neu5Ac-(2-&gt;3)-beta-D-Gal-(1-&gt;4)-beta-D-GlcNAc6S derivative + GDP-beta-L-fucose = an alpha-Neu5Ac-(2-&gt;3)-beta-D-Gal-(1-&gt;4)-[alpha-L-Fuc-(1-&gt;3)]-beta-D-GlcNAc6S derivative + GDP + H(+). It functions in the pathway protein modification; protein glycosylation. In terms of biological role, catalyzes alpha(1-&gt;3) linkage of fucosyl moiety transferred from GDP-beta-L-fucose to N-acetyl glucosamine (GlcNAc) within type 2 lactosamine (LacNAc, Gal-beta(1-&gt;4)GlcNAc) glycan attached to N- or O-linked glycoproteins. Robustly fucosylates nonsialylated distal LacNAc unit of the polylactosamine chain to form Lewis X antigen (CD15), a glycan determinant known to mediate important cellular functions in development and immunity. Fucosylates with lower efficiency sialylated LacNAc acceptors to form sialyl Lewis X and 6-sulfo sialyl Lewis X determinants that serve as recognition epitopes for C-type lectins. Together with FUT7 contributes to SELE, SELL and SELP selectin ligand biosynthesis and selectin-dependent lymphocyte homing, leukocyte migration and blood leukocyte homeostasis. In a cell type specific manner, may also fucosylate the internal LacNAc unit of the polylactosamine chain to form VIM-2 antigen that serves as recognition epitope for SELE. This is Alpha-(1,3)-fucosyltransferase 4 (FUT4) from Bos taurus (Bovine).